The primary structure comprises 317 residues: ATP synthase gamma chain (317 aa).

It belongs to the ATPase gamma chain family. In terms of assembly, F-type ATPases have 2 components, CF(1) - the catalytic core - and CF(0) - the membrane proton channel. CF(1) has five subunits: alpha(3), beta(3), gamma(1), delta(1), epsilon(1). CF(0) has three main subunits: a, b and c.

Its subcellular location is the cellular thylakoid membrane. Produces ATP from ADP in the presence of a proton gradient across the membrane. The gamma chain is believed to be important in regulating ATPase activity and the flow of protons through the CF(0) complex. The protein is ATP synthase gamma chain of Synechococcus sp. (strain CC9902).